A 167-amino-acid polypeptide reads, in one-letter code: Beta-3 adrenergic receptor (167 aa).

The Extracellular portion of the chain corresponds to 1–25 (RVGADAEAQECHSNPRCCSFASNMP). Cys11 and Cys17 are oxidised to a cystine. A helical transmembrane segment spans residues 26 to 47 (YALLSSSVSFYLPLLVMLFVYA). Over 48 to 114 (RVFVVAKRQR…LPLREHRALR (67 aa)) the chain is Cytoplasmic. Residues 66–97 (RFPPEESPRSPSRSPSPVAGGTGEAPDGVPSC) form a disordered region. The chain crosses the membrane as a helical span at residues 115–136 (TLGLIMGIFSLCWLPFFLANVL). The Extracellular portion of the chain corresponds to 137–148 (RALAGPSIVPNG). The chain crosses the membrane as a helical span at residues 149–167 (VFIALNWLGYANSAFNPLI).

The protein belongs to the G-protein coupled receptor 1 family. Adrenergic receptor subfamily. ADRB3 sub-subfamily. Interacts with ARRDC3.

Its subcellular location is the cell membrane. Functionally, beta-adrenergic receptors mediate the catecholamine-induced activation of adenylate cyclase through the action of G proteins. Beta-3 is involved in the regulation of lipolysis and thermogenesis. The chain is Beta-3 adrenergic receptor (ADRB3) from Meriones unguiculatus (Mongolian jird).